The sequence spans 542 residues: Pre-mRNA-splicing factor 38B (542 aa).

Residues 1–12 show a composition bias toward polar residues; that stretch reads MANNSPALTGNS. The disordered stretch occupies residues 1 to 41; that stretch reads MANNSPALTGNSQPQHQAAAAVTQQQQQCGGGGGATKPAVS. A2 carries the N-acetylalanine modification. Residue S5 is modified to Phosphoserine. Residues 13–28 show a composition bias toward low complexity; the sequence is QPQHQAAAAVTQQQQQ. N6-acetyllysine is present on K228. The tract at residues 233 to 542 is disordered; that stretch reads QIKTRPRKIK…KEHKSKDETV (310 aa). Basic and acidic residues predominate over residues 244 to 256; the sequence is DGKEGIEEIDRHV. Residues 257 to 285 are compositionally biased toward basic residues; that stretch reads ERRRSRSPRRSLSPRRSPRRSRSRSHHRE. Phosphoserine is present on residues S289, S291, S319, and S321. Positions 292–328 are enriched in basic and acidic residues; it reads FDRELEREKERQRLEREAKEREKERRRSRSIDRGLDR. A coiled-coil region spans residues 293–322; sequence DRELEREKERQRLEREAKEREKERRRSRSI. Over residues 329 to 345 the composition is skewed to basic residues; sequence RRSRSRERHRSRSRSRD. The span at 346-419 shows a compositional bias: basic and acidic residues; the sequence is RKGDRRDRDR…DRRHRDDKKE (74 aa). Basic residues predominate over residues 420–447; it reads SKKKHSRSRSRERKHRSRSRNAGKRSRS. Residue S445 is modified to Phosphoserine. The span at 448–465 shows a compositional bias: basic and acidic residues; the sequence is RSKDKSSRHKNESKEKAN. Phosphoserine occurs at positions 470, 472, and 478. 2 stretches are compositionally biased toward basic and acidic residues: residues 478–491 and 498–520; these read SVEK…PSRE and RSQD…RQDH. Phosphoserine is present on residues S523, S525, and S530. Over residues 530 to 542 the composition is skewed to basic and acidic residues; it reads SQEKEHKSKDETV.

This sequence belongs to the PRP38 family.

The protein localises to the nucleus. May be required for pre-mRNA splicing. The protein is Pre-mRNA-splicing factor 38B (Prpf38b) of Mus musculus (Mouse).